We begin with the raw amino-acid sequence, 214 residues long: Shikimate kinase (214 aa).

35 to 40 is an ATP binding site; the sequence is GAGKST. Ser39 is a Mg(2+) binding site. Substrate contacts are provided by Asp57, Arg81, and Gly103. Arg141 provides a ligand contact to ATP. Arg160 lines the substrate pocket.

This sequence belongs to the shikimate kinase family. Monomer. The cofactor is Mg(2+).

The protein localises to the cytoplasm. The catalysed reaction is shikimate + ATP = 3-phosphoshikimate + ADP + H(+). Its pathway is metabolic intermediate biosynthesis; chorismate biosynthesis; chorismate from D-erythrose 4-phosphate and phosphoenolpyruvate: step 5/7. Functionally, catalyzes the specific phosphorylation of the 3-hydroxyl group of shikimic acid using ATP as a cosubstrate. This chain is Shikimate kinase, found in Nitrobacter winogradskyi (strain ATCC 25391 / DSM 10237 / CIP 104748 / NCIMB 11846 / Nb-255).